The sequence spans 182 residues: ATP-dependent protease subunit HslV (182 aa).

Residue T12 is part of the active site. Residues A167, C170, and T173 each contribute to the Na(+) site.

This sequence belongs to the peptidase T1B family. HslV subfamily. In terms of assembly, a double ring-shaped homohexamer of HslV is capped on each side by a ring-shaped HslU homohexamer. The assembly of the HslU/HslV complex is dependent on binding of ATP.

It localises to the cytoplasm. The enzyme catalyses ATP-dependent cleavage of peptide bonds with broad specificity.. Allosterically activated by HslU binding. Its function is as follows. Protease subunit of a proteasome-like degradation complex believed to be a general protein degrading machinery. This chain is ATP-dependent protease subunit HslV, found in Chlorobium phaeobacteroides (strain BS1).